A 204-amino-acid polypeptide reads, in one-letter code: Protein C (204 aa).

Residues 1–78 form a disordered region; the sequence is MPSFLRGILK…TEQSQRRPKI (78 aa). A compositionally biased stretch (basic and acidic residues) spans 10–20; that stretch reads KPKERHHENKN. A compositionally biased stretch (low complexity) spans 25-34; the sequence is SSDSLTSSYP.

The protein belongs to the respirovirus protein C family.

The protein is Protein C (P/V/C) of Homo sapiens (Human).